The following is a 358-amino-acid chain: Heme A synthase 1 (358 aa).

5 helical membrane-spanning segments follow: residues 11 to 31 (LVGTWLLVICFMIFGMVVGGG), 98 to 117 (WGRLMAVVFLVPLAVFRLRG), 123 to 143 (LTAWLLFLFGLGAGEATMGWY), 159 to 179 (LYLGPHFVLAMLIFTAMLWTA), and 199 to 219 (LLSVSIGLIIATIGLGALVAA). Histidine 262 is a heme binding site. 3 helical membrane-spanning segments follow: residues 264 to 284 (VAATVTAIVVVIAAAMGLRAP), 292 to 312 (LFLLLAGLVSLQYILGMSTLV), and 315 to 335 (MAELGYVHELNAVLLLAACIA). Heme is bound at residue histidine 322.

Belongs to the COX15/CtaA family. Type 2 subfamily. As to quaternary structure, interacts with CtaB. Heme b is required as a cofactor.

It localises to the cell membrane. The catalysed reaction is Fe(II)-heme o + 2 A + H2O = Fe(II)-heme a + 2 AH2. Its pathway is porphyrin-containing compound metabolism; heme A biosynthesis; heme A from heme O: step 1/1. In terms of biological role, catalyzes the conversion of heme O to heme A by two successive hydroxylations of the methyl group at C8. The first hydroxylation forms heme I, the second hydroxylation results in an unstable dihydroxymethyl group, which spontaneously dehydrates, resulting in the formyl group of heme A. The chain is Heme A synthase 1 from Acidiphilium cryptum (strain JF-5).